A 140-amino-acid chain; its full sequence is ATP synthase epsilon chain (140 aa).

The protein belongs to the ATPase epsilon chain family. F-type ATPases have 2 components, CF(1) - the catalytic core - and CF(0) - the membrane proton channel. CF(1) has five subunits: alpha(3), beta(3), gamma(1), delta(1), epsilon(1). CF(0) has three main subunits: a, b and c.

The protein localises to the cell inner membrane. Produces ATP from ADP in the presence of a proton gradient across the membrane. The chain is ATP synthase epsilon chain from Xanthomonas axonopodis pv. citri (strain 306).